Consider the following 660-residue polypeptide: GTP-binding protein BRASSINAZOLE INSENSITIVE PALE GREEN 2, chloroplastic (660 aa).

The N-terminal 53 residues, 1-53, are a transit peptide targeting the chloroplast; that stretch reads MVVLISSTVTICNVKPKLEDGNFRVSRLIHRPEVPFFSGLSNEKKKKCAVSVM. Disordered stretches follow at residues 127–158 and 191–212; these read EGDEHVENDELAGFEMVDDDADEEEEGEDDEM and NDVELDGFAPAGVGYGNVTEEK. The span at 130–158 shows a compositional bias: acidic residues; the sequence is EHVENDELAGFEMVDDDADEEEEGEDDEM. A CP-type G domain is found at 273-457; sequence STRLIKPMSN…MYDTPGLLHP (185 aa).

This sequence belongs to the TRAFAC class YlqF/YawG GTPase family. In terms of assembly, binds to chloroplast 16S and 23S ribosomal RNAs. In terms of tissue distribution, mostly expressed in stems, petioles, leaves and flowers and, at low levels, also in roots.

Its subcellular location is the plastid. The protein resides in the chloroplast stroma. Its function is as follows. Required for brassinosteroid- (BR) mediated post-transcriptional and translational regulation in the chloroplast, including accumulation of chloroplast rRNA. Involved in chloroplast differentiation. The sequence is that of GTP-binding protein BRASSINAZOLE INSENSITIVE PALE GREEN 2, chloroplastic from Arabidopsis thaliana (Mouse-ear cress).